A 98-amino-acid polypeptide reads, in one-letter code: Cystatin-B (98 aa).

N-acetylmethionine is present on Met-1. Residues 46–50 (QIVAG) carry the Secondary area of contact motif.

The protein belongs to the cystatin family. In terms of tissue distribution, widely expressed. Highest expression in heart, liver and kidney. Lower levels in brain, lung and skeletal muscle. Lowest levels in spleen and testis.

The protein resides in the cytoplasm. In terms of biological role, this is an intracellular thiol proteinase inhibitor. The polypeptide is Cystatin-B (Cstb) (Mus musculus (Mouse)).